We begin with the raw amino-acid sequence, 901 residues long: Protein translocase subunit SecA 1 (901 aa).

Residues Gln-89, 107-111 (GEGKT), and Asp-502 each bind ATP. Positions 856 to 875 (AEAKASGDARPGFVEDDPST) are disordered. The Zn(2+) site is built by Cys-885, Cys-887, Cys-896, and His-897.

Belongs to the SecA family. Monomer and homodimer. Part of the essential Sec protein translocation apparatus which comprises SecA, SecYEG and auxiliary proteins SecDF-YajC and YidC. The cofactor is Zn(2+).

It is found in the cell inner membrane. The protein resides in the cytoplasm. It carries out the reaction ATP + H2O + cellular proteinSide 1 = ADP + phosphate + cellular proteinSide 2.. In terms of biological role, part of the Sec protein translocase complex. Interacts with the SecYEG preprotein conducting channel. Has a central role in coupling the hydrolysis of ATP to the transfer of proteins into and across the cell membrane, serving both as a receptor for the preprotein-SecB complex and as an ATP-driven molecular motor driving the stepwise translocation of polypeptide chains across the membrane. The sequence is that of Protein translocase subunit SecA 1 from Ruegeria pomeroyi (strain ATCC 700808 / DSM 15171 / DSS-3) (Silicibacter pomeroyi).